The chain runs to 206 residues: Inosine triphosphate pyrophosphatase (206 aa).

Position 21–26 (21–26) interacts with ITP; it reads TGNAKK. E49 provides a ligand contact to Mg(2+). Residues K61, 77–78, K94, 153–156, K176, and 181–182 contribute to the ITP site; these read DT, FGWD, and HR.

The protein belongs to the HAM1 NTPase family. As to quaternary structure, homodimer. The cofactor is Mg(2+). Requires Mn(2+) as cofactor.

The protein resides in the cytoplasm. It catalyses the reaction ITP + H2O = IMP + diphosphate + H(+). It carries out the reaction dITP + H2O = dIMP + diphosphate + H(+). The enzyme catalyses XTP + H2O = XMP + diphosphate + H(+). Its function is as follows. Pyrophosphatase that hydrolyzes non-canonical purine nucleotides such as inosine triphosphate (ITP), deoxyinosine triphosphate (dITP) or xanthosine 5'-triphosphate (XTP) to their respective monophosphate derivatives. The enzyme does not distinguish between the deoxy- and ribose forms. Probably excludes non-canonical purines from RNA and DNA precursor pools, thus preventing their incorporation into RNA and DNA and avoiding chromosomal lesions. In Vitis vinifera (Grape), this protein is Inosine triphosphate pyrophosphatase.